The sequence spans 329 residues: Acetyl-coenzyme A carboxylase carboxyl transferase subunit alpha (329 aa).

A CoA carboxyltransferase C-terminal domain is found at glutamine 40–glutamate 294.

Belongs to the AccA family. As to quaternary structure, acetyl-CoA carboxylase is a heterohexamer composed of biotin carboxyl carrier protein (AccB), biotin carboxylase (AccC) and two subunits each of ACCase subunit alpha (AccA) and ACCase subunit beta (AccD).

It is found in the cytoplasm. The enzyme catalyses N(6)-carboxybiotinyl-L-lysyl-[protein] + acetyl-CoA = N(6)-biotinyl-L-lysyl-[protein] + malonyl-CoA. It participates in lipid metabolism; malonyl-CoA biosynthesis; malonyl-CoA from acetyl-CoA: step 1/1. Functionally, component of the acetyl coenzyme A carboxylase (ACC) complex. First, biotin carboxylase catalyzes the carboxylation of biotin on its carrier protein (BCCP) and then the CO(2) group is transferred by the carboxyltransferase to acetyl-CoA to form malonyl-CoA. This Prochlorococcus marinus (strain NATL2A) protein is Acetyl-coenzyme A carboxylase carboxyl transferase subunit alpha.